The sequence spans 274 residues: Thiazole synthase (274 aa).

Lysine 111 acts as the Schiff-base intermediate with DXP in catalysis. 1-deoxy-D-xylulose 5-phosphate is bound by residues glycine 172, alanine 198–glycine 199, and asparagine 220–serine 221. Residues arginine 251–lysine 274 form a disordered region.

It belongs to the ThiG family. Homotetramer. Forms heterodimers with either ThiH or ThiS.

Its subcellular location is the cytoplasm. The catalysed reaction is [ThiS sulfur-carrier protein]-C-terminal-Gly-aminoethanethioate + 2-iminoacetate + 1-deoxy-D-xylulose 5-phosphate = [ThiS sulfur-carrier protein]-C-terminal Gly-Gly + 2-[(2R,5Z)-2-carboxy-4-methylthiazol-5(2H)-ylidene]ethyl phosphate + 2 H2O + H(+). It participates in cofactor biosynthesis; thiamine diphosphate biosynthesis. Its function is as follows. Catalyzes the rearrangement of 1-deoxy-D-xylulose 5-phosphate (DXP) to produce the thiazole phosphate moiety of thiamine. Sulfur is provided by the thiocarboxylate moiety of the carrier protein ThiS. In vitro, sulfur can be provided by H(2)S. This Prochlorococcus marinus (strain MIT 9313) protein is Thiazole synthase.